The following is an 837-amino-acid chain: Tuftelin-interacting protein 11 (837 aa).

2 stretches are compositionally biased toward basic and acidic residues: residues 1–13 (MSLS…GEGR) and 53–64 (VWAERDSDDERP). 3 disordered regions span residues 1–21 (MSLS…DDER), 53–72 (VWAE…KRAR), and 85–133 (LKKG…KGFA). 3 positions are modified to phosphoserine: Ser-2, Ser-59, and Ser-98. Residues 91–102 (EEAELEDSDDEE) are compositionally biased toward acidic residues. A compositionally biased stretch (basic and acidic residues) spans 103–116 (RPVKQDDFPKDFGP). Ser-144 is modified (phosphoserine). The G-patch domain occupies 149-195 (TKGIGQKLLQKMGYVPGRGLGKNAQGIINPIEAKQRKGKGAVGAYGS). A disordered region spans residues 179-236 (IEAKQRKGKGAVGAYGSERTTQSMQDFPVVDSEEEAEEEFQKGLSQWRKDPSGSKKKP). Ser-210 bears the Phosphoserine mark. A Nuclear localization signal motif is present at residues 700 to 705 (VKDKFN). Positions 710 to 734 (IMNRAVSSNVGAYMQPGARENIAYL) are required for nuclear speckle localization.

It belongs to the TFP11/STIP family. Identified in the spliceosome C complex. Found in the Intron Large (IL) complex, a post-mRNA release spliceosomal complex containing the excised intron, U2, U5 and U6 snRNPs, and splicing factors. Interacts with TUFT1. Interacts with DHX15; indicative for a recruitment of DHX15 to the IL complex. Interacts with GCFC2.

The protein localises to the cytoplasm. It localises to the nucleus. Functionally, involved in pre-mRNA splicing, specifically in spliceosome disassembly during late-stage splicing events. Intron turnover seems to proceed through reactions in two lariat-intron associated complexes termed Intron Large (IL) and Intron Small (IS). In cooperation with DHX15 seems to mediate the transition of the U2, U5 and U6 snRNP-containing IL complex to the snRNP-free IS complex leading to efficient debranching and turnover of excised introns. May play a role in the differentiation of ameloblasts and odontoblasts or in the forming of the enamel extracellular matrix. The polypeptide is Tuftelin-interacting protein 11 (TFIP11) (Macaca fascicularis (Crab-eating macaque)).